The sequence spans 102 residues: Large ribosomal subunit protein uL24 (102 aa).

It belongs to the universal ribosomal protein uL24 family. In terms of assembly, part of the 50S ribosomal subunit.

Its function is as follows. One of two assembly initiator proteins, it binds directly to the 5'-end of the 23S rRNA, where it nucleates assembly of the 50S subunit. In terms of biological role, one of the proteins that surrounds the polypeptide exit tunnel on the outside of the subunit. The protein is Large ribosomal subunit protein uL24 of Leuconostoc mesenteroides subsp. mesenteroides (strain ATCC 8293 / DSM 20343 / BCRC 11652 / CCM 1803 / JCM 6124 / NCDO 523 / NBRC 100496 / NCIMB 8023 / NCTC 12954 / NRRL B-1118 / 37Y).